A 1687-amino-acid chain; its full sequence is Gag-Pol polyprotein (1687 aa).

Gly-2 is lipidated: N-myristoyl glycine; by host. Disordered regions lie at residues 107 to 126 (GQDN…SRLP), 136 to 195 (LLSE…STVA), 420 to 447 (HKRE…DRRQ), and 466 to 485 (GRQA…EGRP). The short motif at 108-111 (QDNG) is the PTAP/PSAP motif element. The span at 139-153 (EPPPYPTSPPPPPAP) shows a compositional bias: pro residues. Residues 140–143 (PPPY) carry the PPXY motif motif. The stretch at 408 to 453 (LQDLIKEAEKVYHKRETEEEKQEREKKETEERERRRDRRQEKNLTK) forms a coiled coil. The CCHC-type zinc-finger motif lies at 490-507 (DQCAYCKERGHWARECPR). Residues 544 to 614 (TEFLVDTGAE…CPAPLLGRDL (71 aa)) enclose the Peptidase A2 domain. Catalysis depends on Asp-549, which acts as the Protease; shared with dimeric partner. The 192-residue stretch at 721 to 912 (LDLGILVPCQ…EEVTYLGYLL (192 aa)) folds into the Reverse transcriptase domain. Mg(2+) contacts are provided by Asp-789, Asp-863, Asp-864, Asp-1162, Glu-1200, Asp-1221, and Asp-1291. Positions 1153-1299 (LPGVPAWYTD…ADEAAKQAAQ (147 aa)) constitute an RNase H type-1 domain. Residues 1339-1377 (HQLTHLGPDKLLQLVGRTSFHIPNLQSVVREITSKCQVC) form an HHCC-type zinc finger. The region spanning 1394–1552 (RGDRPGVYWE…TPYEILHGGP (159 aa)) is the Integrase catalytic domain. Positions 1405 and 1464 each coordinate Mg(2+).

Homohexamer; further associates as homomultimer. The virus core is composed of a lattice formed from hexagonal rings, each containing six capsid monomers. In terms of assembly, interacts (via PPXY motif) with host NEDD4. Interacts (via PSAP motif) with host TSG101. As to quaternary structure, the reverse transcriptase is a monomer (Potential). Interacts (via RNase domains) with host release factor ETF1; this interaction is essential for translational readthrough of amber codon between viral gag and pol genes, as well as for viral replication. Homodimer. Mg(2+) serves as cofactor. Post-translationally, specific enzymatic cleavages by the viral protease yield mature proteins. The protease is released by autocatalytic cleavage. The polyprotein is cleaved during and after budding, this process is termed maturation. In terms of processing, phosphorylated on serine residues.

The protein localises to the virion. The protein resides in the host cell membrane. It localises to the host late endosome membrane. It is found in the host endosome. Its subcellular location is the host multivesicular body. The protein localises to the host cytoplasm. It catalyses the reaction DNA(n) + a 2'-deoxyribonucleoside 5'-triphosphate = DNA(n+1) + diphosphate. The catalysed reaction is Endonucleolytic cleavage to 5'-phosphomonoester.. Protease: Most efficiently inhibited by Amprenavir, which is able to block Gag-Pol processing in infected cells. In terms of biological role, plays a role in budding and is processed by the viral protease during virion maturation outside the cell. During budding, it recruits, in a PPXY-dependent or independent manner, Nedd4-like ubiquitin ligases that conjugate ubiquitin molecules to Gag-Pol, or to Gag-Pol binding host factors. Interaction with HECT ubiquitin ligases probably links the viral protein to the host ESCRT pathway and facilitates release. Its function is as follows. Targets Gag and gag-pol polyproteins to the plasma membrane via a multipartite membrane binding signal, that includes its myristoylated N-terminus. Also mediates nuclear localization of the pre-integration complex. Constituent of the pre-integration complex (PIC) which tethers the latter to mitotic chromosomes. This allows the integration of the viral genome into the host DNA. Functionally, forms the spherical core of the virion that encapsulates the genomic RNA-nucleocapsid complex. In terms of biological role, involved in the packaging and encapsidation of two copies of the genome. Binds with high affinity to conserved UCUG elements within the packaging signal, located near the 5'-end of the genome. This binding is dependent on genome dimerization. Acts as a nucleic acid chaperone which is involved in rearrangement of nucleic acid secondary structures during gRNA retrotranscription. Its function is as follows. Protease: The aspartyl protease mediates proteolytic cleavages of Gag and Gag-Pol polyproteins during or shortly after the release of the virion from the plasma membrane. Cleavages take place as an ordered, step-wise cascade to yield mature proteins. This process is called maturation. Displays maximal activity during the budding process just prior to particle release from the cell. Reverse transcriptase/ribonuclease H: RT is a multifunctional enzyme that converts the viral dimeric RNA genome into dsDNA in the cytoplasm, shortly after virus entry into the cell. This enzyme displays a DNA polymerase activity that can copy either DNA or RNA templates, and a ribonuclease H (RNase H) activity that cleaves the RNA strand of RNA-DNA heteroduplexes in a partially processive 3' to 5' endonucleasic mode. Conversion of viral genomic RNA into dsDNA requires many steps. A tRNA binds to the primer-binding site (PBS) situated at the 5' end of the viral RNA. RT uses the 3' end of the tRNA primer to perform a short round of RNA-dependent minus-strand DNA synthesis. The reading proceeds through the U5 region and ends after the repeated (R) region which is present at both ends of viral RNA. The portion of the RNA-DNA heteroduplex is digested by the RNase H, resulting in a ssDNA product attached to the tRNA primer. This ssDNA/tRNA hybridizes with the identical R region situated at the 3' end of viral RNA. This template exchange, known as minus-strand DNA strong stop transfer, can be either intra- or intermolecular. RT uses the 3' end of this newly synthesized short ssDNA to perform the RNA-dependent minus-strand DNA synthesis of the whole template. RNase H digests the RNA template except for a polypurine tract (PPT) situated at the 5' end of the genome. It is not clear if both polymerase and RNase H activities are simultaneous. RNase H probably can proceed both in a polymerase-dependent (RNA cut into small fragments by the same RT performing DNA synthesis) and a polymerase-independent mode (cleavage of remaining RNA fragments by free RTs). Secondly, RT performs DNA-directed plus-strand DNA synthesis using the PPT that has not been removed by RNase H as primers. PPT and tRNA primers are then removed by RNase H. The 3' and 5' ssDNA PBS regions hybridize to form a circular dsDNA intermediate. Strand displacement synthesis by RT to the PBS and PPT ends produces a blunt ended, linear dsDNA copy of the viral genome that includes long terminal repeats (LTRs) at both ends. Functionally, catalyzes viral DNA integration into the host chromosome, by performing a series of DNA cutting and joining reactions. This enzyme activity takes place after virion entry into a cell and reverse transcription of the RNA genome in dsDNA. The first step in the integration process is 3' processing. This step requires a complex comprising the viral genome, matrix protein and integrase. This complex is called the pre-integration complex (PIC). The integrase protein removes 2 nucleotides from each 3' end of the viral DNA, leaving recessed CA OH's at the 3' ends. In the second step that requires cell division, the PIC enters cell nucleus. In the third step, termed strand transfer, the integrase protein joins the previously processed 3' ends to the 5' ends of strands of target cellular DNA at the site of integration. The last step is viral DNA integration into host chromosome. The polypeptide is Gag-Pol polyprotein (pro-pol) (Phascolarctos cinereus (Koala)).